The chain runs to 437 residues: Elongator complex protein 4 (437 aa).

The interval 179–247 is disordered; it reads FSKSSSPTTP…TKTGSQDSPL (69 aa). Over residues 181 to 192 the composition is skewed to polar residues; sequence KSSSPTTPSLEQ. Ser-183 bears the Phosphoserine mark. Positions 220-237 are enriched in low complexity; sequence SANNNNNNNNNSSSVTSS. Ser-242 is modified (phosphoserine).

This sequence belongs to the ELP4 family. In terms of assembly, component of the elongator complex composed of Elp1, Elp2, Elp3, Elp4, Elp5 and Elp6. The elongator complex associates with and stabilizes microtubules; efficient interaction requires the full complex.

Its subcellular location is the cytoplasm. It localises to the nucleus. The protein resides in the cytoskeleton. The protein localises to the spindle. It participates in tRNA modification; 5-methoxycarbonylmethyl-2-thiouridine-tRNA biosynthesis. In terms of biological role, component of the elongator complex, which is required for multiple tRNA modifications, including mcm5U (5-methoxycarbonylmethyl uridine), mcm5s2U (5-methoxycarbonylmethyl-2-thiouridine), and ncm5U (5-carbamoylmethyl uridine). The elongator complex catalyzes the formation of carboxymethyluridine in the wobble base at position 34 in tRNAs. Binding by the elongator complex stabilizes microtubules and promotes their growth. This induces central spindle asymmetry, promoting polarized signaling endosome trafficking during asymmetric cell division and cell fate assignation of sensory organ precursor cells. This Drosophila melanogaster (Fruit fly) protein is Elongator complex protein 4.